The following is a 55-amino-acid chain: uncharacterized protein (55 aa).

This is an uncharacterized protein from Bacillus subtilis (strain 168).